We begin with the raw amino-acid sequence, 368 residues long: Galactoside 2-alpha-L-fucosyltransferase Sec1 (368 aa).

The Cytoplasmic portion of the chain corresponds to 1–20 (MPSDSCLLSLTVLQRLRAIC). A helical; Signal-anchor for type II membrane protein transmembrane segment spans residues 21 to 41 (PPLSTFYLFFVIFVVSTIFHC). The Lumenal portion of the chain corresponds to 42 to 368 (HRRLGLVPAP…APKRHWGALL (327 aa)). Residues N195, N289, and N315 are each glycosylated (N-linked (GlcNAc...) asparagine).

The protein belongs to the glycosyltransferase 11 family.

Its subcellular location is the golgi apparatus. It localises to the golgi stack membrane. The catalysed reaction is a ganglioside GM1 + GDP-beta-L-fucose = a ganglioside Fuc-GM1 + GDP + H(+). It functions in the pathway protein modification; protein glycosylation. Its function is as follows. Catalyzes the transfer of alpha 1,2-linked fucose to ganglioside GM1 and galacto-N-biose. This chain is Galactoside 2-alpha-L-fucosyltransferase Sec1, found in Mus musculus (Mouse).